The following is a 1219-amino-acid chain: Protein jagged-1 (1219 aa).

Residues 1 to 33 (MRSPRTRGRPGRPLSLLLALLCALRAKVCGASG) form the signal peptide. Over 34-1067 (QFELEILSMQ…QRRPLKNRTD (1034 aa)) the chain is Extracellular. An N-linked (GlcNAc...) asparagine glycan is attached at N143. The region spanning 185 to 229 (VTCDDHYYGFGCNKFCRPRDDFFGHYACDQNGNKTCMEGWMGPEC) is the DSL domain. Intrachain disulfides connect C187-C196 and C200-C212. Residues 199 to 207 (FCRPRDDFF) form an important for interaction with NOTCH1 region. N217 is a glycosylation site (N-linked (GlcNAc...) asparagine). 40 cysteine pairs are disulfide-bonded: C220–C229, C234–C245, C238–C251, C253–C262, C265–C276, C271–C282, C284–C293, C300–C312, C306–C322, C324–C333, C340–C351, C345–C360, C362–C371, C378–C389, C383–C398, C400–C409, C416–C427, C421–C436, C438–C447, C454–C464, C458–C473, C475–C484, C491–C502, C496–C511, C513–C522, C529–C540, C534–C549, C551–C560, C578–C605, C599–C615, C617–C626, C633–C644, C638–C653, C655–C664, C671–C682, C676–C691, C693–C702, C709–C720, C714–C729, and C731–C740. Residues 230–263 (NKAICRQGCSPKHGSCKLPGDCRCQYGWQGLYCD) enclose the EGF-like 1 domain. The EGF-like 2; atypical domain maps to 264 to 294 (KCIPHPGCVHGTCNEPWQCLCETNWGGQLCD). EGF-like domains are found at residues 296-334 (DLNY…PNCE) and 336-372 (AEHA…PTCS). The region spanning 374 to 410 (NIDDCSPNNCSHGGTCQDLVNGFKCVCPPQWTGKTCQ) is the EGF-like 5; calcium-binding domain. N-linked (GlcNAc...) asparagine glycosylation occurs at N382. The EGF-like 6; calcium-binding domain maps to 412–448 (DANECEAKPCVNARSCKNLIASYYCDCLPGWMGQNCD). The region spanning 450-485 (NINDCLGQCQNDASCRDLVNGYRCICPPGYAGDHCE) is the EGF-like 7; calcium-binding domain. In terms of domain architecture, EGF-like 8; calcium-binding spans 487–523 (DIDECASNPCLNGGHCQNEINRFQCLCPTGFSGNLCQ). EGF-like domains lie at 525–561 (DIDY…KNCS) and 586–627 (DTPE…TYCH). The N-linked (GlcNAc...) asparagine glycan is linked to N559. The 37-residue stretch at 629–665 (NINDCEGNPCTNGGTCIDGVNSYKCICSDGWEGAHCE) folds into the EGF-like 11; calcium-binding domain. Residues 667–703 (NINDCSQNPCHYGGTCRDLVNDFYCDCKNGWKGKTCH) enclose the EGF-like 12; calcium-binding domain. 2 EGF-like domains span residues 705-741 (RDSQ…TTCN) and 744-780 (RNSS…PICT). Residue N745 is glycosylated (N-linked (GlcNAc...) asparagine). Cystine bridges form between C748-C759, C753-C768, C770-C779, C786-C797, C791-C806, C808-C817, C824-C835, C829-C844, C846-C855, C925-C936, and C948-C958. The EGF-like 15; calcium-binding domain occupies 782–818 (NTNDCSPHPCYNSGTCVDGDNWYRCECAPGFAGPDCR). The region spanning 820-856 (NINECQSSPCAFGATCVDEINGYQCICPPGHSGAKCH) is the EGF-like 16; calcium-binding domain. N960, N991, N1045, and N1064 each carry an N-linked (GlcNAc...) asparagine glycan. Residues 1068–1093 (FLVPLLSSVLTVAWVCCLVTAFYWCV) traverse the membrane as a helical segment. Over 1094–1219 (RKRRRKPSSH…QSLNRMEYIV (126 aa)) the chain is Cytoplasmic. The tract at residues 1182 to 1219 (REEKVPQRTPTKHPNWTNKQDNRDLESAQSLNRMEYIV) is disordered. Polar residues predominate over residues 1189 to 1200 (RTPTKHPNWTNK).

As to quaternary structure, interacts with NOTCH1. Interacts with NOTCH2 and NOTCH3. Widely expressed in a variety of tissues.

Its subcellular location is the membrane. It is found in the cell membrane. In terms of biological role, ligand for multiple Notch receptors and involved in the mediation of Notch signaling. May be involved in cell-fate decisions during hematopoiesis. Enhances fibroblast growth factor-induced angiogenesis (in vitro). Seems to be involved in early and late stages of mammalian cardiovascular development. Inhibits myoblast differentiation. May regulate fibroblast growth factor-induced angiogenesis. This Rattus norvegicus (Rat) protein is Protein jagged-1 (Jag1).